Consider the following 83-residue polypeptide: Large ribosomal subunit protein bL28 (83 aa).

It belongs to the bacterial ribosomal protein bL28 family.

This is Large ribosomal subunit protein bL28 from Amoebophilus asiaticus (strain 5a2).